A 481-amino-acid chain; its full sequence is UDP-N-acetylmuramoyl-L-alanyl-D-glutamate--L-lysine ligase (481 aa).

Ser-42 provides a ligand contact to UDP-N-acetyl-alpha-D-muramoyl-L-alanyl-D-glutamate. Position 118 to 124 (118 to 124 (GTKGKTT)) interacts with ATP. UDP-N-acetyl-alpha-D-muramoyl-L-alanyl-D-glutamate contacts are provided by residues Gln-158, 160–161 (TT), Ser-187, and Arg-195. N6-carboxylysine is present on Lys-229. Positions 404-407 (DDPN) match the L-lysine recognition motif motif.

Belongs to the MurCDEF family. MurE subfamily. In terms of processing, carboxylation is probably crucial for Mg(2+) binding and, consequently, for the gamma-phosphate positioning of ATP.

The protein resides in the cytoplasm. It catalyses the reaction UDP-N-acetyl-alpha-D-muramoyl-L-alanyl-D-glutamate + L-lysine + ATP = UDP-N-acetyl-alpha-D-muramoyl-L-alanyl-gamma-D-glutamyl-L-lysine + ADP + phosphate + H(+). It functions in the pathway cell wall biogenesis; peptidoglycan biosynthesis. Its function is as follows. Catalyzes the addition of L-lysine to the nucleotide precursor UDP-N-acetylmuramoyl-L-alanyl-D-glutamate (UMAG) in the biosynthesis of bacterial cell-wall peptidoglycan. This Streptococcus pyogenes serotype M4 (strain MGAS10750) protein is UDP-N-acetylmuramoyl-L-alanyl-D-glutamate--L-lysine ligase.